The following is a 245-amino-acid chain: Alpha carbonic anhydrase 2 (245 aa).

The signal sequence occupies residues 1–23 (MDKISIRCFIFLVLTSFVTTVSC). One can recognise an Alpha-carbonic anhydrase domain in the interval 37 to 245 (HEFSYEWNQE…THRYFLLFFT (209 aa)). Cysteine 62 and cysteine 222 form a disulfide bridge. Asparagine 95 carries N-linked (GlcNAc...) asparagine glycosylation. Histidine 103 functions as the Proton acceptor in the catalytic mechanism. The N-linked (GlcNAc...) asparagine glycan is linked to asparagine 120. Histidine 130, histidine 132, and histidine 149 together coordinate Zn(2+). The N-linked (GlcNAc...) asparagine glycan is linked to asparagine 156. 218–219 (TT) is a binding site for substrate.

The protein belongs to the alpha-class carbonic anhydrase family. Zn(2+) serves as cofactor. N-glycosylated. Expressed in stems and roots.

The protein localises to the plastid. Its subcellular location is the chloroplast stroma. It catalyses the reaction hydrogencarbonate + H(+) = CO2 + H2O. Its function is as follows. Reversible hydration of carbon dioxide. The sequence is that of Alpha carbonic anhydrase 2 (ACA2) from Arabidopsis thaliana (Mouse-ear cress).